The chain runs to 437 residues: Interactor protein for cytohesin exchange factors 1 (437 aa).

One can recognise a PH domain in the interval 41–140 (HADCQGWLYK…WLNKLGSAVI (100 aa)). Disordered stretches follow at residues 143–225 (ESTT…PDTV) and 273–307 (LSSD…ETKV). Over residues 151–162 (CYSESEQEDPEI) the composition is skewed to acidic residues. The span at 172 to 200 (ASQTQSLTAQQASSSSPSLSGTSYSFSSL) shows a compositional bias: low complexity. Residues 201 to 214 (ENTVKTPSSFPSSL) show a composition bias toward polar residues. Residues 273–283 (LSSDDTSSLSS) are compositionally biased toward low complexity. CRAC domain stretches follow at residues 315–320 (KLYKSL) and 339–348 (LRKSFVKRCK). The tract at residues 389–437 (KYREWKVMNTLLIQDIYQQQRASPAPDDTDDTPQELKKSPSSPSVENSI) is required for interaction with CYTH2. The disordered stretch occupies residues 406–437 (QQQRASPAPDDTDDTPQELKKSPSSPSVENSI). Serine 411 bears the Phosphoserine mark. Over residues 427–437 (SPSSPSVENSI) the composition is skewed to polar residues.

Interacts with guanine-nucleotide exchange factors PSCD1, PSCD2, PSCD3 and PSCD4. Interacts (via C-terminus) with cytohesin-2 CYTH2.

The protein resides in the cytoplasm. It localises to the cell membrane. Enhances the promotion of guanine-nucleotide exchange by PSCD2 on ARF6 in a concentration-dependent manner. The chain is Interactor protein for cytohesin exchange factors 1 (IPCEF1) from Homo sapiens (Human).